A 411-amino-acid chain; its full sequence is LL-diaminopimelate aminotransferase (411 aa).

Tyr15 and Gly42 together coordinate substrate. Residues Tyr72, 108–109 (SK), Tyr132, Asn187, Tyr218, and 246–248 (SFS) each bind pyridoxal 5'-phosphate. Substrate is bound by residues Lys109, Tyr132, and Asn187. Lys249 is subject to N6-(pyridoxal phosphate)lysine. Positions 257 and 292 each coordinate pyridoxal 5'-phosphate. Substrate-binding residues include Asn292 and Arg388.

It belongs to the class-I pyridoxal-phosphate-dependent aminotransferase family. LL-diaminopimelate aminotransferase subfamily. Homodimer. It depends on pyridoxal 5'-phosphate as a cofactor.

The enzyme catalyses (2S,6S)-2,6-diaminopimelate + 2-oxoglutarate = (S)-2,3,4,5-tetrahydrodipicolinate + L-glutamate + H2O + H(+). It participates in amino-acid biosynthesis; L-lysine biosynthesis via DAP pathway; LL-2,6-diaminopimelate from (S)-tetrahydrodipicolinate (aminotransferase route): step 1/1. Involved in the synthesis of meso-diaminopimelate (m-DAP or DL-DAP), required for both lysine and peptidoglycan biosynthesis. Catalyzes the direct conversion of tetrahydrodipicolinate to LL-diaminopimelate. The chain is LL-diaminopimelate aminotransferase from Cyanothece sp. (strain PCC 7425 / ATCC 29141).